The sequence spans 580 residues: MKENKENSSPSVTSANLDHTKPCWYWDKKDLAHTPSQLEGLDPATEARYRREGARFIFDVGTRLGLHYDTLATGIIYFHRFYMFHSFKQFPRYVTGACCLFLAGKVEETPKKCKDIIKTARSLLNDVQFGQFGDDPKEEVMVLERILLQTIKFDLQVEHPYQFLLKYAKQLKGDKNKIQKLVQMAWTFVNDSLCTTLSLQWEPEIIAVAVMYLAGRLCKFEIQEWTSKPMYRRWWEQFVQDVPVDVLEDICHQILDLYSQGKQQMPHHTPHQLQQPPSLQPTPQVPQVQQSQPSQSSEPSQPQQKDPQQPAQQQQPAQQPKKPSPQPSSPRQVKRAVVVSPKEENKAAEPPPPKIPKIETTHPPLPPAHPPPDRKPPLAAALGEAEPPGPVDATDLPKVQIPPPAHPAPVHQPPPLPHRPPPPPPSSYMTGMSTTSSYMSGEGYQSLQSMMKTEGPSYGALPPAYGPPAHLPYHPHVYPPNPPPPPVPPPPASFPPPAIPPPTPGYPPPPPTYNPNFPPPPPRLPPTHAVPPHPPPGLGLPPASYPPPAVPPGGQPPVPPPIPPPGMPPVGGLGRAAWMR.

The segment at 262-580 (KQQMPHHTPH…GGLGRAAWMR (319 aa)) is disordered. Low complexity-rich tracts occupy residues 263 to 277 (QQMP…QQPP) and 285 to 321 (VPQV…QQPK). 4 positions are modified to phosphoserine: Ser324, Ser328, Ser329, and Ser340. Low complexity predominate over residues 377–386 (PLAAALGEAE). Over residues 400 to 426 (QIPPPAHPAPVHQPPPLPHRPPPPPPS) the composition is skewed to pro residues. Residues 427–444 (SYMTGMSTTSSYMSGEGY) are compositionally biased toward low complexity. Pro residues predominate over residues 477–568 (VYPPNPPPPP…PPPIPPPGMP (92 aa)).

It belongs to the cyclin family. Cyclin C subfamily. As to quaternary structure, regulatory subunit of cyclin-dependent kinases. Identified in a complex with a kinase and the RNA polymerase II holoenzyme. Interacts with POLR2A. Interacts with CDK12 and CDK13. Interacts with CDK9 according to PubMed:10574912; does not interact with CDK9 according to PubMed:22012619. In terms of assembly, (Microbial infection) Interacts with human herpes virus 1 (HHV-1) transcriptional regulator ICP22. As to expression, widely expressed. Highest levels in testis.

The protein resides in the nucleus. In terms of biological role, regulatory subunit of cyclin-dependent kinases that mediates activation of target kinases. Plays a role in transcriptional regulation via its role in regulating the phosphorylation of the C-terminal domain (CTD) of the large subunit of RNA polymerase II (POLR2A). This chain is Cyclin-K (CCNK), found in Homo sapiens (Human).